The sequence spans 252 residues: Protein UL24 homolog (252 aa).

The tract at residues 215–252 (SVLTKTSGENRSRASRQVAKNAPKNRIRRTAKKDAKRQ) is disordered. The segment covering 237–252 (PKNRIRRTAKKDAKRQ) has biased composition (basic residues).

The protein belongs to the herpesviridae UL24 family.

The protein localises to the virion. The protein resides in the host cytoplasm. Its subcellular location is the host nucleus. It is found in the host nucleolus. It localises to the host Golgi apparatus. Functionally, may participate in nuclear egress of viral particles. Plays a role in the dispersal of several host nucleolar proteins including NCL/nucleolin and NPM1. Since deletion of host NCL/nucleolin negatively impact on nuclear egress, UL24 supposedly acts on this process through its effect on host nucleoli. The polypeptide is Protein UL24 homolog (U49) (Homo sapiens (Human)).